The primary structure comprises 336 residues: Dihydroorotate dehydrogenase (quinone) (336 aa).

FMN contacts are provided by residues Ala62–Lys66 and Thr86. Lys66 serves as a coordination point for substrate. Asn111 to Phe115 is a substrate binding site. 2 residues coordinate FMN: Asn139 and Asn172. Asn172 contributes to the substrate binding site. Residue Ser175 is the Nucleophile of the active site. Asn177 lines the substrate pocket. The FMN site is built by Lys217 and Thr245. A substrate-binding site is contributed by Asn246–Thr247. FMN is bound by residues Gly268, Gly297, and Tyr318–Ser319.

Belongs to the dihydroorotate dehydrogenase family. Type 2 subfamily. In terms of assembly, monomer. The cofactor is FMN.

The protein resides in the cell membrane. The enzyme catalyses (S)-dihydroorotate + a quinone = orotate + a quinol. It functions in the pathway pyrimidine metabolism; UMP biosynthesis via de novo pathway; orotate from (S)-dihydroorotate (quinone route): step 1/1. Its function is as follows. Catalyzes the conversion of dihydroorotate to orotate with quinone as electron acceptor. The sequence is that of Dihydroorotate dehydrogenase (quinone) from Yersinia enterocolitica serotype O:8 / biotype 1B (strain NCTC 13174 / 8081).